We begin with the raw amino-acid sequence, 687 residues long: Homoaconitase, mitochondrial (687 aa).

Residues 1-18 (MFAFRNRAVTQTLLVRRY) constitute a mitochondrion transit peptide. 3 residues coordinate [4Fe-4S] cluster: C340, C400, and C403. Residues 481 to 490 (EAEADAEAAE) are compositionally biased toward acidic residues. Residues 481–500 (EAEADAEAAESDPAPSGGVL) are disordered.

This sequence belongs to the aconitase/IPM isomerase family. Requires [4Fe-4S] cluster as cofactor.

The protein resides in the mitochondrion. It carries out the reaction (2R,3S)-homoisocitrate = cis-homoaconitate + H2O. Its pathway is amino-acid biosynthesis; L-lysine biosynthesis via AAA pathway; L-alpha-aminoadipate from 2-oxoglutarate: step 3/5. Functionally, catalyzes the reversible hydration of cis-homoaconitate to (2R,3S)-homoisocitrate, a step in the alpha-aminoadipate pathway for lysine biosynthesis. The polypeptide is Homoaconitase, mitochondrial (LYS4) (Yarrowia lipolytica (strain CLIB 122 / E 150) (Yeast)).